The primary structure comprises 136 residues: UPF0310 protein SMU_442 (136 aa).

It belongs to the UPF0310 family.

This is UPF0310 protein SMU_442 from Streptococcus mutans serotype c (strain ATCC 700610 / UA159).